The sequence spans 72 residues: Translation initiation factor IF-1 (72 aa).

Positions 1 to 72 (MAKEDVIEIE…TRGRITYRFK (72 aa)) constitute an S1-like domain.

It belongs to the IF-1 family. As to quaternary structure, component of the 30S ribosomal translation pre-initiation complex which assembles on the 30S ribosome in the order IF-2 and IF-3, IF-1 and N-formylmethionyl-tRNA(fMet); mRNA recruitment can occur at any time during PIC assembly.

Its subcellular location is the cytoplasm. Its function is as follows. One of the essential components for the initiation of protein synthesis. Stabilizes the binding of IF-2 and IF-3 on the 30S subunit to which N-formylmethionyl-tRNA(fMet) subsequently binds. Helps modulate mRNA selection, yielding the 30S pre-initiation complex (PIC). Upon addition of the 50S ribosomal subunit IF-1, IF-2 and IF-3 are released leaving the mature 70S translation initiation complex. The protein is Translation initiation factor IF-1 of Streptococcus suis (strain 05ZYH33).